The primary structure comprises 298 residues: 4-diphosphocytidyl-2-C-methyl-D-erythritol kinase (298 aa).

Lysine 15 is an active-site residue. 102–112 (PVAAGIGGGSS) is an ATP binding site. Aspartate 142 is an active-site residue.

The protein belongs to the GHMP kinase family. IspE subfamily.

It carries out the reaction 4-CDP-2-C-methyl-D-erythritol + ATP = 4-CDP-2-C-methyl-D-erythritol 2-phosphate + ADP + H(+). It functions in the pathway isoprenoid biosynthesis; isopentenyl diphosphate biosynthesis via DXP pathway; isopentenyl diphosphate from 1-deoxy-D-xylulose 5-phosphate: step 3/6. Functionally, catalyzes the phosphorylation of the position 2 hydroxy group of 4-diphosphocytidyl-2C-methyl-D-erythritol. The sequence is that of 4-diphosphocytidyl-2-C-methyl-D-erythritol kinase from Hyphomonas neptunium (strain ATCC 15444).